The following is a 453-amino-acid chain: Major fimbrium subunit FimC (453 aa).

Residues 1-28 form the signal peptide; that stretch reads MKMKYFHHPSGLLPRLLLLLLLTMGAVA. Cys29 carries the N-palmitoyl cysteine lipid modification. A lipid anchor (S-diacylglycerol cysteine) is attached at Cys29. A propeptide spanning residues 29–56 is cleaved from the precursor; the sequence is CTKEDNPDQPTSDEVATVKMSLDDVEMR.

It belongs to the bacteroidetes fimbrillin superfamily. FimA/Mfa1 family. In terms of assembly, fimbriae are composed of a major, structural subunit and the minor components FimC, FimD and FimE. Identified in a complex composed of FimC, FimD and FimE (in vitro). The complex interacts with host extracellular matrix proteins, including fibronectin and type I collagen. Interacts with host CXCR4.

The protein localises to the fimbrium. The protein resides in the cell outer membrane. Its function is as follows. Minor component of fimbriae. These long, filamentous pili are attached to the cell surface; they mediate biofilm formation, adhesion onto host cells and onto other bacteria that are part of the oral microbiome. They play an important role in invasion of periodontal tissues and are major virulence factors. FimC, FimD and FimE contribute to interaction with host CXCR4 and thereby down-regulate the TLR2-mediated host immune response. The chain is Major fimbrium subunit FimC from Porphyromonas gingivalis (strain ATCC 33277 / DSM 20709 / CIP 103683 / JCM 12257 / NCTC 11834 / 2561).